We begin with the raw amino-acid sequence, 544 residues long: Membrane protein insertase YidC (544 aa).

The next 5 helical transmembrane spans lie at 15–35 (LFLIGLFMLINDIFSSIMLSF), 321–341 (LWYLIQVPMQMVMQVFYDVIP), 343–363 (WGLSIIFLTIVVRILIFPLTF), 409–429 (LGGCFPVILQLPIFFALYSLV), and 506–526 (MPIMFFFILYNMPSGLLIYWI).

The protein belongs to the OXA1/ALB3/YidC family. Type 1 subfamily. In terms of assembly, interacts with the Sec translocase complex via SecD. Specifically interacts with transmembrane segments of nascent integral membrane proteins during membrane integration.

The protein resides in the cell inner membrane. In terms of biological role, required for the insertion and/or proper folding and/or complex formation of integral membrane proteins into the membrane. Involved in integration of membrane proteins that insert both dependently and independently of the Sec translocase complex, as well as at least some lipoproteins. Aids folding of multispanning membrane proteins. The protein is Membrane protein insertase YidC of Borrelia garinii subsp. bavariensis (strain ATCC BAA-2496 / DSM 23469 / PBi) (Borreliella bavariensis).